The following is a 352-amino-acid chain: Ion-translocating oxidoreductase complex subunit D (352 aa).

5 helical membrane passes run 20–40, 42–62, 78–109, 123–143, and 148–168; these read IMLLVLLAAVPGIAAQLWFFG, GTLVQILLASVSALLAEALVL, ALLTGLLLAVSIPPLAPWWMVVLGTVFAVIIA, PAMIGYVVLLISFPVQMTSWL, and IAVNIPGFIDAIQVIFSGHTA. Threonine 187 carries the post-translational modification FMN phosphoryl threonine. 5 consecutive transmembrane segments (helical) span residues 214–234, 242–262, 267–287, 301–321, and 322–342; these read ILAGAGWQWVNLAWLAGGVWL, WHIPLSFLVTLALCATLGWLF, LAAPQIHLLSGATMLGAFFIL, LIFGALAGLLVWLIRSFGGYP, and DGVAFAVLLANITVPLIDYYT.

Belongs to the NqrB/RnfD family. In terms of assembly, the complex is composed of six subunits: RsxA, RsxB, RsxC, RsxD, RsxE and RsxG. FMN serves as cofactor.

It is found in the cell inner membrane. In terms of biological role, part of a membrane-bound complex that couples electron transfer with translocation of ions across the membrane. Required to maintain the reduced state of SoxR. The sequence is that of Ion-translocating oxidoreductase complex subunit D from Escherichia coli O157:H7.